The primary structure comprises 393 residues: Formate-dependent phosphoribosylglycinamide formyltransferase (393 aa).

N(1)-(5-phospho-beta-D-ribosyl)glycinamide is bound by residues 22 to 23 (EL) and Glu82. ATP contacts are provided by residues Arg114, Lys155, 160-165 (SSGKGQ), 195-198 (EGFI), and Glu203. The region spanning 119-308 (RLAAEELKLP…QFALHARAIL (190 aa)) is the ATP-grasp domain. Residues Glu267 and Glu279 each contribute to the Mg(2+) site. Residues Asp286, Lys356, and 363 to 364 (RR) contribute to the N(1)-(5-phospho-beta-D-ribosyl)glycinamide site.

Belongs to the PurK/PurT family. Homodimer.

It carries out the reaction N(1)-(5-phospho-beta-D-ribosyl)glycinamide + formate + ATP = N(2)-formyl-N(1)-(5-phospho-beta-D-ribosyl)glycinamide + ADP + phosphate + H(+). The protein operates within purine metabolism; IMP biosynthesis via de novo pathway; N(2)-formyl-N(1)-(5-phospho-D-ribosyl)glycinamide from N(1)-(5-phospho-D-ribosyl)glycinamide (formate route): step 1/1. Involved in the de novo purine biosynthesis. Catalyzes the transfer of formate to 5-phospho-ribosyl-glycinamide (GAR), producing 5-phospho-ribosyl-N-formylglycinamide (FGAR). Formate is provided by PurU via hydrolysis of 10-formyl-tetrahydrofolate. The protein is Formate-dependent phosphoribosylglycinamide formyltransferase of Pseudomonas savastanoi pv. phaseolicola (strain 1448A / Race 6) (Pseudomonas syringae pv. phaseolicola (strain 1448A / Race 6)).